Consider the following 104-residue polypeptide: MSEARQQSSSEGGGDLSDYEEKFEQCCTLLEQRIIQDDQIPRNVRRAAKQAIEALKEEGQSPGVRASTAISTLEEVVNDQNTPEYARTVLLQVIATLEQVKDEV.

This sequence belongs to the UPF0147 family.

The sequence is that of UPF0147 protein MK1586 from Methanopyrus kandleri (strain AV19 / DSM 6324 / JCM 9639 / NBRC 100938).